The sequence spans 502 residues: GTPase Obg (502 aa).

Residues 2-159 form the Obg domain; that stretch reads NRFIDRVVLH…HDLILELKSM (158 aa). Positions 160 to 341 constitute an OBG-type G domain; that stretch reads ADVGLVGFPS…LKYKLLEIVQ (182 aa). GTP-binding positions include 166–173, 191–195, 212–215, 292–295, and 322–324; these read GFPSAGKS, FTTLQ, DVPG, NKAD, and SAV. Mg(2+)-binding residues include Ser-173 and Thr-193. The OCT domain maps to 364-444; that stretch reads DGRRRREEFE…IGGVTFEWEP (81 aa).

Belongs to the TRAFAC class OBG-HflX-like GTPase superfamily. OBG GTPase family. Monomer. It depends on Mg(2+) as a cofactor.

Its subcellular location is the cytoplasm. An essential GTPase which binds GTP, GDP and possibly (p)ppGpp with moderate affinity, with high nucleotide exchange rates and a fairly low GTP hydrolysis rate. Plays a role in control of the cell cycle, stress response, ribosome biogenesis and in those bacteria that undergo differentiation, in morphogenesis control. In Corynebacterium efficiens (strain DSM 44549 / YS-314 / AJ 12310 / JCM 11189 / NBRC 100395), this protein is GTPase Obg.